Consider the following 296-residue polypeptide: MLIGSHVSMNGKKMLQGSAEEAHRLNEKTFMIYTGAPQNTRRKAIEDLNIEAGHEAMKEYGLSNIVVHAPYIINIANTQKPHVFELGVDFLQKEIERTEAIGAKDIVLHPGSHVGAGSEAGIKKIIEGLNEVLTNDNDVRIALETMAGKGSEVGRTFEELAQIIEGVNHNERLSICFDTCHTHDAGYKVKDDFDSVLEEFDNVIGLDRIKVLHVNDSKNEIGAHKDRHENIGFGHIGFDALNYIVHHEVFENIPKILETPFVGEDKKNKRPPYKHEIEMLETETFNPNMKEIIMSE.

Zn(2+) is bound by residues His-68, His-109, Glu-144, Asp-178, His-181, His-213, Asp-226, His-228, and Glu-258.

This sequence belongs to the AP endonuclease 2 family. Zn(2+) is required as a cofactor.

It carries out the reaction Endonucleolytic cleavage to 5'-phosphooligonucleotide end-products.. Functionally, endonuclease IV plays a role in DNA repair. It cleaves phosphodiester bonds at apurinic or apyrimidinic (AP) sites, generating a 3'-hydroxyl group and a 5'-terminal sugar phosphate. This is Probable endonuclease 4 from Staphylococcus carnosus (strain TM300).